We begin with the raw amino-acid sequence, 1412 residues long: DNA-directed RNA polymerase subunit beta' (1412 aa).

Positions 70, 72, 85, and 88 each coordinate Zn(2+). Mg(2+)-binding residues include D460, D462, and D464. Zn(2+) is bound by residues C819, C893, C900, and C903. The disordered stretch occupies residues 1391–1412; it reads AEESFEFGTPETPAAEQQHSGE.

It belongs to the RNA polymerase beta' chain family. The RNAP catalytic core consists of 2 alpha, 1 beta, 1 beta' and 1 omega subunit. When a sigma factor is associated with the core the holoenzyme is formed, which can initiate transcription. The cofactor is Mg(2+). Requires Zn(2+) as cofactor.

The catalysed reaction is RNA(n) + a ribonucleoside 5'-triphosphate = RNA(n+1) + diphosphate. DNA-dependent RNA polymerase catalyzes the transcription of DNA into RNA using the four ribonucleoside triphosphates as substrates. This chain is DNA-directed RNA polymerase subunit beta', found in Paraburkholderia phytofirmans (strain DSM 17436 / LMG 22146 / PsJN) (Burkholderia phytofirmans).